Consider the following 397-residue polypeptide: Putative nickel insertion protein (397 aa).

The protein belongs to the LarC family.

The polypeptide is Putative nickel insertion protein (Synechococcus sp. (strain JA-3-3Ab) (Cyanobacteria bacterium Yellowstone A-Prime)).